A 326-amino-acid chain; its full sequence is D-allose transport system permease protein AlsC (326 aa).

Residues 1–18 are Cytoplasmic-facing; that stretch reads MGFTTRVKSEASEKKPFN. A helical transmembrane segment spans residues 19 to 39; it reads FALFWDKYGTFFILAIIVAIF. Residues 40–70 lie on the Periplasmic side of the membrane; that stretch reads GSLSPEYFLTTNNITQIFVQSSVTVLIGMGE. A helical membrane pass occupies residues 71–91; that stretch reads FFAILVAGIDLSVGAILALSG. Topologically, residues 92-101 are cytoplasmic; the sequence is MVTAKLMLAG. Residues 102–122 form a helical membrane-spanning segment; the sequence is VDPFLAAMIGGVLVGGALGAI. Residues 123 to 124 lie on the Periplasmic side of the membrane; it reads NG. Residues 125–145 form a helical membrane-spanning segment; the sequence is CLVNWTGLHPFIITLGTNAIF. The Cytoplasmic segment spans residues 146–149; sequence RGIT. A helical membrane pass occupies residues 150-170; the sequence is LVISDANSVYGFSFDFVNFFA. The Periplasmic portion of the chain corresponds to 171–172; the sequence is AS. The helical transmembrane segment at 173 to 193 threads the bilayer; sequence VIGIPVPVIFSLIVALILWFL. At 194–221 the chain is on the cytoplasmic side; the sequence is TTRMRLGRNIYALGGNKNSAFYSGIDVK. Residues 222–242 traverse the membrane as a helical segment; it reads FHILVVFIISGVCAGLAGVVS. At 243–252 the chain is on the periplasmic side; the sequence is TARLGAAEPL. A helical membrane pass occupies residues 253-273; that stretch reads AGMGFETYAIASAIIGGTSFF. Residues 274–278 lie on the Cytoplasmic side of the membrane; that stretch reads GGKGR. Transmembrane regions (helical) follow at residues 279 to 299 and 300 to 320; these read IFSVVIGGLIIGTINNGLNIL and QVQTYYQLVVMGGLIIAAVAL. Residues 321–326 are Cytoplasmic-facing; sequence DRLISK.

This sequence belongs to the binding-protein-dependent transport system permease family. AraH/RbsC subfamily.

The protein localises to the cell inner membrane. In terms of biological role, part of the binding-protein-dependent transport system AlsBAC for D-allose; probably responsible for the translocation of the substrate across the membrane. This chain is D-allose transport system permease protein AlsC (alsC), found in Escherichia coli (strain K12).